Consider the following 152-residue polypeptide: MFRGASAINLDTKGRVAIPKRYREPLHVEYNSQLVITVDIQSACLLLYPLDEWSKIEAKLLLLSDTLPAERAMKRMLLGYAHECELDGNGRLLLPLPLRQYANLGKRAMLVGQLNKFELWDETAWQHQIEQSRETIQDEEFAENIRLADFSL.

2 SpoVT-AbrB domains span residues 5–52 and 81–124; these read ASAI…PLDE and AHEC…DETA.

The protein belongs to the MraZ family. Forms oligomers.

The protein resides in the cytoplasm. It is found in the nucleoid. The polypeptide is Transcriptional regulator MraZ (Shewanella woodyi (strain ATCC 51908 / MS32)).